The primary structure comprises 143 residues: MFFLTIYHLIYKYNPLIFAQIFIGCLMYFMLIIFVWKIIDPKCFSKYICYIIIFAIIDFVVCFKFIYVKKNSSVKKVHVVTIGQANVPIETSEISDNTDYKVTYDQVSCTIDSSNNVNNMFLTSDNPVECLDEISETSLTQDE.

Helical transmembrane passes span Leu16–Trp36 and Ile48–Val68. Asn71 is a glycosylation site (N-linked (GlcNAc...) asparagine; by host).

The protein localises to the membrane. This is an uncharacterized protein from Acanthamoeba polyphaga (Amoeba).